The chain runs to 301 residues: Ribosome-inactivating protein (301 aa).

Positions 1–16 are cleaved as a propeptide — or 12 (in 10% of the molecules); that stretch reads MAEITLEPSDLMAQTN. Residues 162–186 constitute a propeptide that is removed on maturation; sequence MATLEEEEVKMQMQMPEAADLAAAA. Glutamate 207 is a catalytic residue. A propeptide spanning residues 258-301 is cleaved from the precursor; it reads VIPDMQKLGIKDKNEAARIVALVKNQTTAAAATAASADNDDDEA.

The protein belongs to the ribosome-inactivating protein family. Type 1 RIP subfamily. In terms of assembly, synthesized and stored in the kernel as a 34 kDa inactive precursor. During germination, this neutral precursor is converted into a basic, active form by limited proteolysis, which removes 25 AA of net charge -6 from the center of the polypeptide chain. Additional processing also occurs at the N- and C-termini of the polypeptide. A two-chain active RIP (comprised of 16.5 and 8.5 kDa fragments that remain tightly associated) is produced from this processing event.

It catalyses the reaction Endohydrolysis of the N-glycosidic bond at one specific adenosine on the 28S rRNA.. In terms of biological role, potent catalytic inactivator of eukaryotic protein synthesis. It may be a component of natural defense mechanisms involved in protecting the kernel against soil-borne fungal infections. The sequence is that of Ribosome-inactivating protein from Zea mays (Maize).